A 101-amino-acid polypeptide reads, in one-letter code: Large ribosomal subunit protein uL24c (101 aa).

It belongs to the universal ribosomal protein uL24 family. As to quaternary structure, part of the 50S ribosomal subunit.

It is found in the plastid. The protein localises to the chloroplast. Its function is as follows. One of two assembly initiator proteins, it binds directly to the 5'-end of the 23S rRNA, where it nucleates assembly of the 50S subunit. The sequence is that of Large ribosomal subunit protein uL24c (rpl24) from Guillardia theta (Cryptophyte).